The sequence spans 413 residues: Serine hydroxymethyltransferase (413 aa).

(6S)-5,6,7,8-tetrahydrofolate contacts are provided by residues Leu-117 and 121–123 (GHL). Lys-226 bears the N6-(pyridoxal phosphate)lysine mark. (6S)-5,6,7,8-tetrahydrofolate contacts are provided by residues Glu-239 and 349–351 (SPF).

It belongs to the SHMT family. Homodimer. It depends on pyridoxal 5'-phosphate as a cofactor.

It is found in the cytoplasm. The enzyme catalyses (6R)-5,10-methylene-5,6,7,8-tetrahydrofolate + glycine + H2O = (6S)-5,6,7,8-tetrahydrofolate + L-serine. Its pathway is one-carbon metabolism; tetrahydrofolate interconversion. The protein operates within amino-acid biosynthesis; glycine biosynthesis; glycine from L-serine: step 1/1. Its function is as follows. Catalyzes the reversible interconversion of serine and glycine with tetrahydrofolate (THF) serving as the one-carbon carrier. This reaction serves as the major source of one-carbon groups required for the biosynthesis of purines, thymidylate, methionine, and other important biomolecules. Also exhibits THF-independent aldolase activity toward beta-hydroxyamino acids, producing glycine and aldehydes, via a retro-aldol mechanism. The polypeptide is Serine hydroxymethyltransferase (Bacillus cytotoxicus (strain DSM 22905 / CIP 110041 / 391-98 / NVH 391-98)).